An 834-amino-acid polypeptide reads, in one-letter code: Protein EFR3 homolog cmp44E (834 aa).

The HEAT repeat unit spans residues 120–156 (NLFVESFLRMVQKLLEDSNPNLKIMATNSFVKFANIN). Residues 595–612 (LHAISIGLLVLISRVSGI) form a helical membrane-spanning segment.

This sequence belongs to the EFR3 family. As to expression, expression during embryogenesis is ubiquitous with notably higher levels in the CNS and brain.

The protein localises to the membrane. An essential gene required for embryogenesis; required for cell viability. The protein is Protein EFR3 homolog cmp44E (stmA) of Drosophila melanogaster (Fruit fly).